A 49-amino-acid chain; its full sequence is uncharacterized protein (49 aa).

An N-terminal signal peptide occupies residues 1-22; that stretch reads MVFLLFLSFVLSSIFLVPLVYM.

It is found in the secreted. This is an uncharacterized protein from Dictyostelium discoideum (Social amoeba).